Here is a 393-residue protein sequence, read N- to C-terminus: Acetate kinase (393 aa).

Asparagine 7 is a Mg(2+) binding site. ATP is bound at residue lysine 14. A substrate-binding site is contributed by arginine 89. The active-site Proton donor/acceptor is the aspartate 146. ATP-binding positions include 204-208 (HIGNG), 279-281 (DSR), and 327-331 (GIGEN). Position 379 (glutamate 379) interacts with Mg(2+).

The protein belongs to the acetokinase family. Homodimer. It depends on Mg(2+) as a cofactor. The cofactor is Mn(2+).

It is found in the cytoplasm. It carries out the reaction acetate + ATP = acetyl phosphate + ADP. It participates in metabolic intermediate biosynthesis; acetyl-CoA biosynthesis; acetyl-CoA from acetate: step 1/2. Functionally, catalyzes the formation of acetyl phosphate from acetate and ATP. Can also catalyze the reverse reaction. The polypeptide is Acetate kinase (Acholeplasma laidlawii (strain PG-8A)).